The chain runs to 700 residues: Methionine--tRNA ligase (700 aa).

Positions 14 to 24 (PYANGPVHLGH) match the 'HIGH' region motif. Residues C146, C149, C159, and C162 each coordinate Zn(2+). The 'KMSKS' region signature appears at 343 to 347 (KFSKS). K346 provides a ligand contact to ATP. Positions 599 to 700 (EFEKIDLRVA…GDSIVGKPVK (102 aa)) constitute a tRNA-binding domain.

It belongs to the class-I aminoacyl-tRNA synthetase family. MetG type 1 subfamily. Homodimer. Requires Zn(2+) as cofactor.

The protein localises to the cytoplasm. It carries out the reaction tRNA(Met) + L-methionine + ATP = L-methionyl-tRNA(Met) + AMP + diphosphate. Is required not only for elongation of protein synthesis but also for the initiation of all mRNA translation through initiator tRNA(fMet) aminoacylation. This Chloroherpeton thalassium (strain ATCC 35110 / GB-78) protein is Methionine--tRNA ligase.